Here is a 245-residue protein sequence, read N- to C-terminus: Ribosome maturation factor RimP (245 aa).

This sequence belongs to the RimP family.

The protein localises to the cytoplasm. In terms of biological role, required for maturation of 30S ribosomal subunits. The sequence is that of Ribosome maturation factor RimP from Verminephrobacter eiseniae (strain EF01-2).